A 140-amino-acid polypeptide reads, in one-letter code: Required for drug-induced death protein 1 (140 aa).

A disordered region spans residues 1–95 (MTVGARLRSK…DKPKKRYRRK (95 aa)). Residues 29–53 (EETDAIVEHLEGEDEDPESQDCERE) are compositionally biased toward acidic residues. A helical membrane pass occupies residues 118-140 (LQGFAAAYSAPFGVATSVVSFVR).

Its subcellular location is the membrane. Functionally, regulates drug efflux through modulation of ABCB1 localization and activity. This chain is Required for drug-induced death protein 1, found in Rattus norvegicus (Rat).